The chain runs to 667 residues: Transketolase 2 (667 aa).

Position 25 (histidine 25) interacts with substrate. Thiamine diphosphate is bound by residues histidine 65 and 113 to 115 (GPL). A Mg(2+)-binding site is contributed by aspartate 154. Residues glycine 155 and asparagine 184 each coordinate thiamine diphosphate. Asparagine 184 and isoleucine 186 together coordinate Mg(2+). Histidine 260 contacts substrate. Histidine 260 serves as a coordination point for thiamine diphosphate. Lysine 342 carries the N6-acetyllysine modification. Substrate-binding residues include arginine 357 and serine 384. Glutamate 410 (proton donor) is an active-site residue. Phenylalanine 436 lines the thiamine diphosphate pocket. Residues histidine 460, aspartate 468, and arginine 519 each coordinate substrate.

The protein belongs to the transketolase family. In terms of assembly, homodimer. Mg(2+) is required as a cofactor. It depends on Ca(2+) as a cofactor. The cofactor is Mn(2+). Co(2+) serves as cofactor. Requires thiamine diphosphate as cofactor.

The catalysed reaction is D-sedoheptulose 7-phosphate + D-glyceraldehyde 3-phosphate = aldehydo-D-ribose 5-phosphate + D-xylulose 5-phosphate. In terms of biological role, catalyzes the reversible transfer of a two-carbon ketol group from sedoheptulose-7-phosphate to glyceraldehyde-3-phosphate, producing xylulose-5-phosphate and ribose-5-phosphate. Catalyzes the transfer of a two-carbon ketol group from a ketose donor to an aldose acceptor, via a covalent intermediate with the cofactor thiamine pyrophosphate. This chain is Transketolase 2, found in Escherichia coli (strain K12).